The chain runs to 1793 residues: Chitin synthase 5 (1793 aa).

The interval 1–28 is disordered; it reads MTNPRMSMYSLASEAPGGNRGTGQQSTQ. Asn70, Asn164, Asn638, Asn664, and Asn669 each carry an N-linked (GlcNAc...) asparagine glycan. The next 2 membrane-spanning stretches (helical) occupy residues 750–770 and 786–806; these read VWVF…LRYV and LVLC…IVAF. The Cytochrome b5 heme-binding domain occupies 815-877; sequence DKAYSQKEVD…GMNLDDYFVA (63 aa). 3 N-linked (GlcNAc...) asparagine glycosylation sites follow: Asn897, Asn1019, and Asn1023. The helical transmembrane segment at 1056–1076 threads the bilayer; the sequence is LLLAFSIMLCAVILLKFVSAL. Asn1421 carries N-linked (GlcNAc...) asparagine glycosylation. 3 consecutive transmembrane segments (helical) span residues 1452–1472, 1479–1499, and 1507–1527; these read LFGT…IYLV, FPLI…LIFI, and IGWM…LPIY. N-linked (GlcNAc...) asparagine glycans are attached at residues Asn1534 and Asn1705. The DEK-C domain occupies 1735–1791; the sequence is GPDDGMIVEAIRTVLMEVDLDTVTKKQVRALVEQRLQSELVGERRTFMDRQIDHELA.

Belongs to the chitin synthase family. Class V subfamily.

It localises to the cell membrane. It catalyses the reaction [(1-&gt;4)-N-acetyl-beta-D-glucosaminyl](n) + UDP-N-acetyl-alpha-D-glucosamine = [(1-&gt;4)-N-acetyl-beta-D-glucosaminyl](n+1) + UDP + H(+). Its function is as follows. Polymerizes chitin, a structural polymer of the cell wall and septum, by transferring the sugar moiety of UDP-GlcNAc to the non-reducing end of the growing chitin polymer. Regulates Germination and Tolerance to Hyperosmotic Stress. Plays a key role in pathogenicity. Likely contributes to post-penetration virulence. This Verticillium dahliae (strain VdLs.17 / ATCC MYA-4575 / FGSC 10137) (Verticillium wilt) protein is Chitin synthase 5.